The primary structure comprises 110 residues: UPF0060 membrane protein Ajs_2087 (110 aa).

4 helical membrane-spanning segments follow: residues 7 to 27 (LALF…PWLW), 33 to 53 (SAWL…LLTL), 63 to 83 (AAYG…VDGV), and 86 to 106 (GPWD…IAFA).

Belongs to the UPF0060 family.

The protein resides in the cell inner membrane. The protein is UPF0060 membrane protein Ajs_2087 of Acidovorax sp. (strain JS42).